Here is a 321-residue protein sequence, read N- to C-terminus: Ribosomal RNA small subunit methyltransferase H (321 aa).

S-adenosyl-L-methionine-binding positions include 40–42, aspartate 60, phenylalanine 84, aspartate 106, and glutamine 113; that span reads GGH.

The protein belongs to the methyltransferase superfamily. RsmH family.

The protein localises to the cytoplasm. It carries out the reaction cytidine(1402) in 16S rRNA + S-adenosyl-L-methionine = N(4)-methylcytidine(1402) in 16S rRNA + S-adenosyl-L-homocysteine + H(+). Its function is as follows. Specifically methylates the N4 position of cytidine in position 1402 (C1402) of 16S rRNA. This is Ribosomal RNA small subunit methyltransferase H from Haemophilus influenzae (strain PittEE).